A 211-amino-acid chain; its full sequence is Metalloproteinase inhibitor 3 (211 aa).

A signal peptide spans 1–23 (MTPWLGLVVLLGSWSLGDWGAEA). Residue Cys-24 participates in Zn(2+) binding. Involved in metalloproteinase-binding stretches follow at residues 24–27 (CTCS) and 88–89 (ES). 6 cysteine pairs are disulfide-bonded: Cys-24–Cys-91, Cys-26–Cys-118, Cys-36–Cys-143, Cys-145–Cys-192, Cys-150–Cys-155, and Cys-163–Cys-184. The NTR domain maps to 24–143 (CTCSPSHPQD…GLNYRYHLGC (120 aa)). A mediates interaction with EFEMP1 region spans residues 105–188 (TGRVYDGKMY…SKHYACIRQK (84 aa)). The N-linked (GlcNAc...) asparagine glycan is linked to Asn-207.

This sequence belongs to the protease inhibitor I35 (TIMP) family. In terms of assembly, interacts with EFEMP1. Interacts with KDR.

The protein localises to the secreted. It is found in the extracellular space. Its subcellular location is the extracellular matrix. In terms of biological role, mediates a variety of processes including matrix regulation and turnover, inflammation, and angiogenesis, through reversible inhibition of zinc protease superfamily enzymes, primarily matrix metalloproteinases (MMPs). Regulates extracellular matrix (ECM) remodeling through inhibition of matrix metalloproteinases (MMP) including MMP-1, MMP-2, MMP-3, MMP-7, MMP-9, MMP-13, MMP-14 and MMP-15. Additionally, modulates the processing of amyloid precursor protein (APP) and apolipoprotein E receptor ApoER2 by inhibiting two alpha-secretases ADAM10 and ADAM17. Functions as a tumor suppressor and a potent inhibitor of angiogenesis. Exerts its anti-angiogenic effect by directly interacting with vascular endothelial growth factor (VEGF) receptor-2/KDR, preventing its binding to the VEGFA ligand. Selectively induces apoptosis in angiogenic endothelial cells through a caspase-independent cell death pathway. Mechanistically, inhibits matrix-induced focal adhesion kinase PTK2 tyrosine phosphorylation and association with paxillin/PXN and disrupts the incorporation of ITGB3, PTK2 and PXN into focal adhesion contacts on the matrix. The protein is Metalloproteinase inhibitor 3 (TIMP3) of Equus caballus (Horse).